The primary structure comprises 391 residues: 2-deoxy-scyllo-inosose synthase (391 aa).

NAD(+)-binding positions include D42, 73–76 (EVHK), 105–109 (GVTGN), 129–130 (TT), 140–142 (SLK), and 151–152 (KN). K142 is an active-site residue. E184 lines the Co(2+) pocket. Residue E244 is part of the active site. The Co(2+) site is built by H247 and H263.

It belongs to the sugar phosphate cyclases superfamily. DOI synthase family. The cofactor is NAD(+). It depends on Co(2+) as a cofactor.

The catalysed reaction is D-glucose 6-phosphate = 2-deoxy-L-scyllo-inosose + phosphate. The protein operates within metabolic intermediate biosynthesis; 2-deoxystreptamine biosynthesis; 2-deoxystreptamine from D-glucose 6-phosphate: step 1/4. Its pathway is antibiotic biosynthesis; ribostamycin biosynthesis. Its function is as follows. Catalyzes the intramolecular carbocycle formation from D-glucose-6-phosphate to 2-deoxy-scyllo-inosose (DOI). This Streptomyces ribosidificus protein is 2-deoxy-scyllo-inosose synthase (rbmA).